A 241-amino-acid polypeptide reads, in one-letter code: Platelet-derived growth factor subunit B (241 aa).

The first 20 residues, 1-20, serve as a signal peptide directing secretion; it reads MNRCWALFLPLCCYLRLVSA. A propeptide spans 21–81 (removed in mature form); that stretch reads EGDPIPEELY…ELESSSRGRR (61 aa). N63 carries N-linked (GlcNAc...) asparagine glycosylation. Intrachain disulfides connect C97/C141, C130/C178, and C134/C180. A propeptide spans 191 to 241 (removed in mature form); the sequence is RSPGTSREQRAKTPQARVTIRTVRIRRPPKGKHRKFKHTHDKAALKETLGA. Residues 217-230 are compositionally biased toward basic residues; it reads RPPKGKHRKFKHTH. Positions 217–241 are disordered; that stretch reads RPPKGKHRKFKHTHDKAALKETLGA.

It belongs to the PDGF/VEGF growth factor family. Antiparallel homodimer; disulfide-linked. Antiparallel heterodimer with PDGFA; disulfide-linked. The PDGFB homodimer interacts with PDGFRA and PDGFRB homodimers, and with heterodimers formed by PDGFRA and PDGFRB. The heterodimer composed of PDGFA and PDGFB interacts with PDGFRB homodimers, and with heterodimers formed by PDGFRA and PDGFRB. Interacts with XLKD1. Interacts with LRP1. Interacts with SORL1 (via the N-terminal ectodomain). Interacts with CD82; this interaction inhibits PDGFB-mediated signaling pathway. In terms of tissue distribution, localized to vascular smooth muscle cells. Also weakly expressed by cortical interstitial cells but absent in tubules. Up-regulated in areas of renal fibrosis. In mice with unilateral ureteral obstruction, an increased expression in interstitial cells and in some tubules observed after day 4.

It is found in the secreted. Growth factor that plays an essential role in the regulation of embryonic development, cell proliferation, cell migration, survival and chemotaxis. Potent mitogen for cells of mesenchymal origin. Required for normal proliferation and recruitment of pericytes and vascular smooth muscle cells in the central nervous system, skin, lung, heart and placenta. Required for normal blood vessel development, and for normal development of kidney glomeruli. Plays an important role in wound healing. Signaling is modulated by the formation of heterodimers with PDGFA. This chain is Platelet-derived growth factor subunit B (Pdgfb), found in Mus musculus (Mouse).